The following is a 238-amino-acid chain: ATP-dependent dethiobiotin synthetase BioD (238 aa).

12–17 contacts ATP; that stretch reads EVGKTV. Threonine 16 provides a ligand contact to Mg(2+). Lysine 37 is an active-site residue. Substrate is bound at residue threonine 41. ATP contacts are provided by residues aspartate 50, 109 to 112, 170 to 171, and 200 to 202; these read EGAG, GS, and PAG. Mg(2+) is bound by residues aspartate 50 and glutamate 109.

It belongs to the dethiobiotin synthetase family. Homodimer. The cofactor is Mg(2+).

The protein localises to the cytoplasm. The enzyme catalyses (7R,8S)-7,8-diammoniononanoate + CO2 + ATP = (4R,5S)-dethiobiotin + ADP + phosphate + 3 H(+). The protein operates within cofactor biosynthesis; biotin biosynthesis; biotin from 7,8-diaminononanoate: step 1/2. In terms of biological role, catalyzes a mechanistically unusual reaction, the ATP-dependent insertion of CO2 between the N7 and N8 nitrogen atoms of 7,8-diaminopelargonic acid (DAPA, also called 7,8-diammoniononanoate) to form a ureido ring. The sequence is that of ATP-dependent dethiobiotin synthetase BioD from Streptomyces coelicolor (strain ATCC BAA-471 / A3(2) / M145).